The primary structure comprises 261 residues: Carbonic anhydrase 1 (261 aa).

N-acetylalanine is present on Ala-2. Residues 4 to 261 (SDWGYDSPNG…LKGRTVRAFF (258 aa)) form the Alpha-carbonic anhydrase domain. His-65 acts as the Proton donor/acceptor in catalysis. 3 residues coordinate Zn(2+): His-95, His-97, and His-120. Substrate is bound by residues Thr-200 and 200–201 (TH).

Belongs to the alpha-carbonic anhydrase family. The cofactor is Zn(2+).

The protein resides in the cytoplasm. It catalyses the reaction hydrogencarbonate + H(+) = CO2 + H2O. The catalysed reaction is urea = cyanamide + H2O. With respect to regulation, inhibited by acetazolamide. Catalyzes the reversible hydration of carbon dioxide. Can hydrate cyanamide to urea. The protein is Carbonic anhydrase 1 (CA1) of Equus caballus (Horse).